We begin with the raw amino-acid sequence, 95 residues long: Co-chaperonin GroES (95 aa).

This sequence belongs to the GroES chaperonin family. In terms of assembly, heptamer of 7 subunits arranged in a ring. Interacts with the chaperonin GroEL.

The protein localises to the cytoplasm. Its function is as follows. Together with the chaperonin GroEL, plays an essential role in assisting protein folding. The GroEL-GroES system forms a nano-cage that allows encapsulation of the non-native substrate proteins and provides a physical environment optimized to promote and accelerate protein folding. GroES binds to the apical surface of the GroEL ring, thereby capping the opening of the GroEL channel. This chain is Co-chaperonin GroES, found in Bordetella petrii (strain ATCC BAA-461 / DSM 12804 / CCUG 43448).